A 920-amino-acid polypeptide reads, in one-letter code: MPLKKLESSNNQDIIAEEVALLKEMLENITRRMIGDDAFTVIESIMVLSEKQDYIELEKVVANISNQEMEVISRYFSILPLLINISEDVDLAYEINYQNNTDTDYLGKLALTIKDLAGKDNGKDILEQVNVVPVLTAHPTQVQRKTILELTTHIHKLLRKYRDAKAGVINLEKWRQELYRYIEMIMQTDIIREKKLQVKNEIKNVMQYYDGSLIQAVTKLTTEYKNLAQKHGLELDNPKPITMGMWIGGDRDGNPFVTAETLCLSATVQSEVILNYYIDELAALYRTFSLSSTLVQPNSEVERLASLSQDQSIYRGNEPYRRAFHYIQSRLKQTQIQLTNQPAARMSSSVGLNTSAWSSPASLENPILAYDSPVDFKADLKAIEQSLLDNGNSALIEGDLREVMQAVDIFGFFLASIDMRQDSSVQEACVAELLKGANIVDDYSSLSETEKCDVLLQQLMEEPRTLSSAAVAKSDLLEKELAIYTTARELKDKLGEEVIKQHIISHTESVSDMFELAIMLKEVGLVDQQRARVQIVPLFETIEDLDNARDIMAAYLSHDIVKSWIATNRNYQEIMLGYSDSNKDGGYLASGWTLYKAQNELTAIGEEHGVKITFFHGRGGTVGRGGGPSYDAITSQPFGSIKDRIRLTEQGEIIENKYGNKDVAYYHLEMLISASINRMVTQMITDPNEIDSFREIMDSIVADSNIIYRKLVFDNPHFYDYFFEASPIKEVSSLNIGSRPAARKTITEITGLRAIPWVFSWSQNRIMFPGWYGVGSAFKRYIDRAQGNLERLQHMYQTWPFFHSLLSNVDMVLSKSNMNIAFQYAQLAERQDVRDVFYEILDEWQLTKNVILAIQDHDDLLEDNPSLKHSLKSRLPYFNVLNYIQIELIKRWRNNQLDENDEKLIHTTINGIATGLRNSG.

Residues His-138 and Lys-583 contribute to the active site.

Belongs to the PEPCase type 1 family. Requires Mg(2+) as cofactor.

The enzyme catalyses oxaloacetate + phosphate = phosphoenolpyruvate + hydrogencarbonate. Its function is as follows. Forms oxaloacetate, a four-carbon dicarboxylic acid source for the tricarboxylic acid cycle. This is Phosphoenolpyruvate carboxylase from Streptococcus pyogenes serotype M1.